A 378-amino-acid chain; its full sequence is MLLLPLSVLILLTQPPRSLGAEMKTYSQRAVANACALVMCSPMENGLPGRDGRDGREGPRGEKGDPGLPGAVGRAGMPGLAGPVGPKGDNGSTGEPGAKGDIGPCGPPGPPGIPGPAGKEGPSGQQGNIGPPGTPGPKGETGPKGEVGALGMQGSTGARGPAGLKGERGAPGERGAPGSAGAAGPAGATGPQGPSGARGPPGLKGDRGPPGERGAKGESGLPGITALRQQVETLQGQVQRLQKAFSQYKKVELFPNGRGVGEKIFKTGGFEKTFQDAQQVCTQAGGQMASPRSETENEALSQLVTAQNKAAFLSMTDIKTEGNFTYPTGEPLVYANWAPGEPNNNGGSSGAENCVEIFPNGKWNDKACGELRLVICEF.

An N-terminal signal peptide occupies residues 1–20; that stretch reads MLLLPLSVLILLTQPPRSLG. Residues Cys35 and Cys40 each carry the S-nitrosocysteine modification. The tract at residues 43–221 is disordered; that stretch reads MENGLPGRDG…ERGAKGESGL (179 aa). A Collagen-like domain is found at 46–222; that stretch reads GLPGRDGRDG…RGAKGESGLP (177 aa). The span at 50–65 shows a compositional bias: basic and acidic residues; sequence RDGRDGREGPRGEKGD. A 4-hydroxyproline modification is found at Pro78. The residue at position 87 (Lys87) is a 5-hydroxylysine. A glycan (N-linked (GlcNAc...) asparagine) is linked at Asn90. Residue Pro96 is modified to 4-hydroxyproline. At Lys99 the chain carries 5-hydroxylysine. A compositionally biased stretch (pro residues) spans 105 to 114; it reads CGPPGPPGIP. The span at 137–146 shows a compositional bias: low complexity; that stretch reads PKGETGPKGE. 4-hydroxyproline is present on residues Pro171 and Pro177. Residues 173–197 are compositionally biased toward low complexity; the sequence is ERGAPGSAGAAGPAGATGPQGPSGA. Positions 204 to 216 are enriched in basic and acidic residues; sequence KGDRGPPGERGAK. Positions 223–254 form a coiled coil; that stretch reads GITALRQQVETLQGQVQRLQKAFSQYKKVELF. One can recognise a C-type lectin domain in the interval 260-378; the sequence is VGEKIFKTGG…GELRLVICEF (119 aa). Disulfide bonds link Cys281-Cys376 and Cys354-Cys368. Asn323 carries an N-linked (GlcNAc...) asparagine glycan.

It belongs to the SFTPD family. As to quaternary structure, oligomeric complex of 4 set of homotrimers. Hydroxylation on proline residues within the sequence motif, GXPG, is most likely to be 4-hydroxy as this fits the requirement for 4-hydroxylation in vertebrates. In terms of processing, S-nitrosylation at Cys-35 and Cys-40 alters the quaternary structure which results in a pro-inflammatory chemoattractive signaling activity with macrophages.

The protein localises to the secreted. It localises to the extracellular space. Its subcellular location is the extracellular matrix. The protein resides in the surface film. Functionally, contributes to the lung's defense against inhaled microorganisms, organic antigens and toxins. Interacts with compounds such as bacterial lipopolysaccharides, oligosaccharides and fatty acids and modulates leukocyte action in immune response. May participate in the extracellular reorganization or turnover of pulmonary surfactant. Binds strongly maltose residues and to a lesser extent other alpha-glucosyl moieties. The chain is Pulmonary surfactant-associated protein D (SFTPD) from Sus scrofa (Pig).